The chain runs to 155 residues: uncharacterized protein (155 aa).

In terms of domain architecture, Macro spans 1 to 155 (MIVKYIKGDI…IVIVDWEPLL (155 aa)).

This is an uncharacterized protein from Escherichia coli (Bacteriophage T4).